A 371-amino-acid polypeptide reads, in one-letter code: Mannose-1-phosphate guanylyltransferase catalytic subunit beta (371 aa).

The interval 14-233 (RALILVGGYG…TGFWMDIGQP (220 aa)) is substrate-binding domain. GDP-alpha-D-mannose is bound at residue aspartate 122. Aspartate 122 contributes to the Mg(2+) binding site. The active site involves lysine 173. Residue aspartate 229 coordinates GDP-alpha-D-mannose. Mg(2+) is bound at residue aspartate 229. Positions 256–371 (YTGPGVVGNV…ASVPEPQIIM (116 aa)) are hexapeptide repeat domain.

It belongs to the transferase hexapeptide repeat family. Component of the GMPPA-GMPPB mannose-1-phosphate guanylyltransferase complex composed of 4 Gmppa subunits and 8 Gmppb subunits; the complex is organized into three layers, a central layer made up of 2 Gmppa dimers sandwiched between two layers each made up of 2 Gmppb dimers. Gmppb catalytic activity is reduced when part of the complex and binding of GDP-alpha-D-Mannose by Gmppa induces allosteric feedback inhibition of Gmppb. The cofactor is Mg(2+).

It catalyses the reaction alpha-D-mannose 1-phosphate + GTP + H(+) = GDP-alpha-D-mannose + diphosphate. Its pathway is nucleotide-sugar biosynthesis; GDP-alpha-D-mannose biosynthesis; GDP-alpha-D-mannose from alpha-D-mannose 1-phosphate (GTP route): step 1/1. Enzyme activity is reduced by incorporation into the GMPPA-GMPPB mannose-1-phosphate guanylyltransferase complex. Allosterically inhibited, when part of the GMPPA-GMPPB complex, by GDP-alpha-D-mannose binding to Gmppa. Its function is as follows. Catalytic subunit of the GMPPA-GMPPB mannose-1-phosphate guanylyltransferase complex. Catalyzes the formation of GDP-mannose, an essential precursor of glycan moieties of glycoproteins and glycolipids. Can catalyze the reverse reaction in vitro. Together with GMPPA regulates GDP-alpha-D-mannose levels. This is Mannose-1-phosphate guanylyltransferase catalytic subunit beta from Drosophila pseudoobscura pseudoobscura (Fruit fly).